A 206-amino-acid chain; its full sequence is dITP/XTP pyrophosphatase (206 aa).

Residue 7 to 12 (SSHGYK) coordinates substrate. Aspartate 70 (proton acceptor) is an active-site residue. Aspartate 70 is a binding site for Mg(2+). Residues threonine 71, 154–157 (FGYD), lysine 177, and 182–183 (HR) contribute to the substrate site.

It belongs to the HAM1 NTPase family. Homodimer. Mg(2+) serves as cofactor.

It catalyses the reaction XTP + H2O = XMP + diphosphate + H(+). It carries out the reaction dITP + H2O = dIMP + diphosphate + H(+). The enzyme catalyses ITP + H2O = IMP + diphosphate + H(+). Its function is as follows. Pyrophosphatase that catalyzes the hydrolysis of nucleoside triphosphates to their monophosphate derivatives, with a high preference for the non-canonical purine nucleotides XTP (xanthosine triphosphate), dITP (deoxyinosine triphosphate) and ITP. Seems to function as a house-cleaning enzyme that removes non-canonical purine nucleotides from the nucleotide pool, thus preventing their incorporation into DNA/RNA and avoiding chromosomal lesions. In Chlamydia abortus (strain DSM 27085 / S26/3) (Chlamydophila abortus), this protein is dITP/XTP pyrophosphatase.